Consider the following 360-residue polypeptide: Photosystem II protein D1 (360 aa).

The next 3 helical transmembrane spans lie at 30 to 47 (YVGWFGVLMIPCLLAAAA), 119 to 134 (HFLIGISAYMGRQWEL), and 143 to 157 (WICVAYSAPVSAAFA). Residue histidine 119 coordinates chlorophyll a. Residue tyrosine 127 coordinates pheophytin a. Residues aspartate 171 and glutamate 190 each contribute to the [CaMn4O5] cluster site. A helical membrane pass occupies residues 198 to 219 (FHMAGVAGMFGGSLFSAMHGSL). A chlorophyll a-binding site is contributed by histidine 199. A quinone-binding positions include histidine 216 and 265 to 266 (SF). A Fe cation-binding site is contributed by histidine 216. Residue histidine 273 participates in Fe cation binding. Residues 275–289 (FLAVFPVVCVWLTSM) form a helical membrane-spanning segment. Positions 333, 334, 343, and 345 each coordinate [CaMn4O5] cluster. Positions 346-360 (AAESTTVALTAPAIG) are excised as a propeptide.

This sequence belongs to the reaction center PufL/M/PsbA/D family. PSII is composed of 1 copy each of membrane proteins PsbA, PsbB, PsbC, PsbD, PsbE, PsbF, PsbH, PsbI, PsbJ, PsbK, PsbL, PsbM, PsbT, PsbX, PsbY, Psb30/Ycf12, peripheral proteins PsbO, CyanoQ (PsbQ), PsbU, PsbV and a large number of cofactors. It forms dimeric complexes. The D1/D2 heterodimer binds P680, chlorophylls that are the primary electron donor of PSII, and subsequent electron acceptors. It shares a non-heme iron and each subunit binds pheophytin, quinone, additional chlorophylls, carotenoids and lipids. D1 provides most of the ligands for the Mn4-Ca-O5 cluster of the oxygen-evolving complex (OEC). There is also a Cl(-1) ion associated with D1 and D2, which is required for oxygen evolution. The PSII complex binds additional chlorophylls, carotenoids and specific lipids. is required as a cofactor. In terms of processing, tyr-162 forms a radical intermediate that is referred to as redox-active TyrZ, YZ or Y-Z. C-terminally processed by CtpA; processing is essential to allow assembly of the oxygen-evolving complex and thus photosynthetic growth.

The protein resides in the cellular thylakoid membrane. It carries out the reaction 2 a plastoquinone + 4 hnu + 2 H2O = 2 a plastoquinol + O2. Photosystem II (PSII) is a light-driven water:plastoquinone oxidoreductase that uses light energy to abstract electrons from H(2)O, generating O(2) and a proton gradient subsequently used for ATP formation. It consists of a core antenna complex that captures photons, and an electron transfer chain that converts photonic excitation into a charge separation. The D1/D2 (PsbA/PsbD) reaction center heterodimer binds P680, the primary electron donor of PSII as well as several subsequent electron acceptors. This chain is Photosystem II protein D1, found in Prochlorococcus marinus (strain MIT 9515).